The primary structure comprises 333 residues: Protein RecA (333 aa).

An ATP-binding site is contributed by 69-76; it reads GPESSGKT.

The protein belongs to the RecA family.

It is found in the cytoplasm. Functionally, can catalyze the hydrolysis of ATP in the presence of single-stranded DNA, the ATP-dependent uptake of single-stranded DNA by duplex DNA, and the ATP-dependent hybridization of homologous single-stranded DNAs. It interacts with LexA causing its activation and leading to its autocatalytic cleavage. This chain is Protein RecA, found in Mesoplasma florum (strain ATCC 33453 / NBRC 100688 / NCTC 11704 / L1) (Acholeplasma florum).